Reading from the N-terminus, the 362-residue chain is Peptide chain release factor 1 (362 aa).

The residue at position 235 (Q235) is an N5-methylglutamine.

The protein belongs to the prokaryotic/mitochondrial release factor family. In terms of processing, methylated by PrmC. Methylation increases the termination efficiency of RF1.

The protein localises to the cytoplasm. Functionally, peptide chain release factor 1 directs the termination of translation in response to the peptide chain termination codons UAG and UAA. In Acinetobacter baumannii (strain AYE), this protein is Peptide chain release factor 1.